A 425-amino-acid chain; its full sequence is Proline--tRNA ligase (425 aa).

Belongs to the class-II aminoacyl-tRNA synthetase family. ProS type 2 subfamily. Homodimer.

It localises to the cytoplasm. The enzyme catalyses tRNA(Pro) + L-proline + ATP = L-prolyl-tRNA(Pro) + AMP + diphosphate. Catalyzes the attachment of proline to tRNA(Pro) in a two-step reaction: proline is first activated by ATP to form Pro-AMP and then transferred to the acceptor end of tRNA(Pro). The polypeptide is Proline--tRNA ligase (Wolbachia sp. subsp. Brugia malayi (strain TRS)).